The sequence spans 64 residues: DNA gyrase inhibitor YacG (64 aa).

Zn(2+) contacts are provided by cysteine 9, cysteine 12, cysteine 28, and cysteine 32. A disordered region spans residues lysine 45–lysine 64. The segment covering serine 54–lysine 64 has biased composition (acidic residues).

It belongs to the DNA gyrase inhibitor YacG family. In terms of assembly, interacts with GyrB. Requires Zn(2+) as cofactor.

In terms of biological role, inhibits all the catalytic activities of DNA gyrase by preventing its interaction with DNA. Acts by binding directly to the C-terminal domain of GyrB, which probably disrupts DNA binding by the gyrase. This is DNA gyrase inhibitor YacG from Escherichia fergusonii (strain ATCC 35469 / DSM 13698 / CCUG 18766 / IAM 14443 / JCM 21226 / LMG 7866 / NBRC 102419 / NCTC 12128 / CDC 0568-73).